Reading from the N-terminus, the 235-residue chain is C-type lectin domain family 2 member D-related protein (235 aa).

Residues 1–50 (MPSSAHLQDPPPHLSRTLTQDEEQTSLRQSSSCGPSTTSASASESLSGST) form a disordered region. Topologically, residues 1-75 (MPSSAHLQDP…KIIPTESAAK (75 aa)) are cytoplasmic. A compositionally biased stretch (low complexity) spans 30-50 (SSSCGPSTTSASASESLSGST). A helical; Signal-anchor for type II membrane protein membrane pass occupies residues 76-96 (LLCCYAVFMALTVVVIALSIA). Residues 97–235 (LSVKKTPQIS…KLNSYTSQCP (139 aa)) lie on the Extracellular side of the membrane. Residues 121-232 (FGNKCYYFNE…ICSKLNSYTS (112 aa)) enclose the C-type lectin domain. Asparagine 134 carries an N-linked (GlcNAc...) asparagine glycan.

It localises to the cell membrane. Lectin-type cell surface receptor. The polypeptide is C-type lectin domain family 2 member D-related protein (Rattus norvegicus (Rat)).